A 204-amino-acid chain; its full sequence is MNSFKNFLKEWGLFLLILSLLALSRIFFWSNVRVEGHSMDPTLADGEILFVVKHLPIDRFDIVVAHEEDGNKDIVKRVIGMPGDTIRYENDKLYINDKETDEPYLADYIKRFKDDKLQSTYSGKGFEGNKGTFFRSIAQKAQAFTVDVNYNTNFSFTVPEGEYLLLGDDRLVSSDSRHVGTFKAKDITGEAKFRLWPITRIGTF.

The Cytoplasmic portion of the chain corresponds to 1 to 10; it reads MNSFKNFLKE. The helical transmembrane segment at 11 to 30 threads the bilayer; that stretch reads WGLFLLILSLLALSRIFFWS. Residues 31-204 are Extracellular-facing; the sequence is NVRVEGHSMD…LWPITRIGTF (174 aa). Residues serine 38 and lysine 76 contribute to the active site.

Belongs to the peptidase S26 family.

It localises to the cell membrane. It carries out the reaction Cleavage of hydrophobic, N-terminal signal or leader sequences from secreted and periplasmic proteins.. The protein is Signal peptidase I (lepB) of Streptococcus pneumoniae serotype 4 (strain ATCC BAA-334 / TIGR4).